The primary structure comprises 389 residues: Succinate--CoA ligase [ADP-forming] subunit beta (389 aa).

Residues lysine 46, 53-55 (GRG), glutamate 99, cysteine 102, and glutamate 107 each bind ATP. Positions 199 and 213 each coordinate Mg(2+). Substrate is bound by residues asparagine 264 and 321–323 (GIV).

Belongs to the succinate/malate CoA ligase beta subunit family. Heterotetramer of two alpha and two beta subunits. It depends on Mg(2+) as a cofactor.

The enzyme catalyses succinate + ATP + CoA = succinyl-CoA + ADP + phosphate. The catalysed reaction is GTP + succinate + CoA = succinyl-CoA + GDP + phosphate. It functions in the pathway carbohydrate metabolism; tricarboxylic acid cycle; succinate from succinyl-CoA (ligase route): step 1/1. Functionally, succinyl-CoA synthetase functions in the citric acid cycle (TCA), coupling the hydrolysis of succinyl-CoA to the synthesis of either ATP or GTP and thus represents the only step of substrate-level phosphorylation in the TCA. The beta subunit provides nucleotide specificity of the enzyme and binds the substrate succinate, while the binding sites for coenzyme A and phosphate are found in the alpha subunit. The protein is Succinate--CoA ligase [ADP-forming] subunit beta of Haemophilus influenzae (strain 86-028NP).